The sequence spans 2110 residues: MDEQEFKLFLKFFILELKGILREIKNSHQLLDSWTKLNSLGTLIQIFFNPERAFQLLDPRVWKILLSRNSRGWRKTRHFTIGRVLLFVVVVLMYRMSRRNMVENKKSYLTGVLPIPLNPIGHRNDTLEESIGFSNINRLILPLLYLPKGKKIPESSFLDPNESTWALPITKKSIMPESRWGSRWWCSWVGKRRDSSCKRAHKTVAGIEISFKEKKSKYLEFLEDSEYPTLINQREIQQIKEESILWHPSPSLERTEEEIKEFLGNSTRSLRSFFSDRWSELYLSSNPTERFTRDQKLLKQDLSFVPYRRSENQEIVNLFKIITYLQKTVSIYPISSDPGCDRVPKDELDVDSSKKISFFKKNPFFDLLNLFHDRSRGGYTLERDFESEERFEERADLFTLSITEPDQVYHNSPKMDLIHIQEKGYIRKVLDRFFLMNRSARNFESGIPGAQIGNETLSHRTLMKYTVNRHFSSLKKSRKKSFDPLLFIERSMNRDPAAYRDKWSKGGKTFQEHLEHFVSEQKNRFKVQKSRFKAVFDRFHQSQYSIDWSVFIDKQDFPKARLFFLFVLVRSFLYKSLPFLLSKLPLLLSKLPLLVSKVLPLLSKLLPFFFVSCGNIPIHRSEIRIYELKGPTDQPCNPLLESIGLQILHLNKLKPCLLDDHETSQKSKIVGTIDNTDSYFSILFDDEENWMNPVKAFQRSSLISAFYKANRLRFLNNPHRFSFYCNKIFPFVVEKARFKNSDFLYGQFLKTFFIRKKPFSLCGEKHAFGERATLLPIESEVSKILIPQVSKILIPDDFPQSGDERYNLCKSFHFPTRSVPLVDRALYSIADISERPLTEGQMVNLERTSFQPLSDIHLSDSERKNLHQDLNFNSNMGLIHTPYSEKDLPSEKRKKRNLGRNLKKCVEKGQMFRTLLSKMYRTLLSKWNLFQTYMPWFLTSTGYKYLTLLFLDLFSDLVPILSLGIRQNCVSLFDHILGDIRDDIRQGVIRPWQILQEKWVLPQRNRIREISRMCLRNLTLSAERIRRNNESPLTHTHLRSPNVLEFLYSTLLLLLVAGYLVCTYLSRLSKDYGELQTELKKVKSLMIPSYTIELRKLMDRYPPSELNSFGLKNLFLVAMEELKESLSVVGNMLEGGGRAYGVEAIFSNWNLNLIDISDLISLIPNPIDRITFSINTRHLSHTSKEIYSFIRKRERVYGAWIDDKIESLLSTSVAIDDCDRGNLLQFSTLTLTTEKGVDQILLSLTQSSKNASGSQMIEQPGEMYLRHVVDLQKKYLMGYEFNTSSLAERRIFLAHYQTMTYSKTSCGVNAFHFPSHEKPFSLRLDLSPPRGILVIGSIGTGRSYLIKSLAKNTHFPLITLEMEARSSWPFFQHLDEIYGDQLEYVYDDTSLSVEVEEEEDTSWGIEEWSLPDTREDDEIEDQAEMDTRRDLDGIEYTHAIQDMIDLGISVDAQLNFLPESILINEIEGHDVDELDEAETELWELWMEEWDRHLLGISLQFALVRAMTPCILWIPNIHDVDLEDRTTLAGLMNSLSGDSEGRSTRKTLVIASTHLPKKVDPALIASNRFNTCIKVRRLLSTQERERFFTLSYTRGFHFEKEIFDTNGFRSITTQDLAALTNEALSISITQKKSIIDTNTIRFALHRQTWAVESRSISISDHGILFYQTGRALAQNLFLSQGLIDPISVYIKKKSCNDDGYSYLYRWYLELGTSMKRLTILLYLLSCFAGSVAQDLWSPPGPDDKAEMFSYGLVENDSHLAQGLLELEGALVASGTEKACSRFDNDQVTLLFRAEPSLDRMQDGFCSIFEQEGEEAAPGLEKPLVTHIVSAPRIWNPWLILFDWIDIEEASRKEEEAELQDEEAELQDEGAGRKDEEAELQEFQDLEDPQDQEGGLQELQGLQKEEAYLYQKALELQAQEDELQKYGPGFLESGTIMKKYPTRNRFRFFTEQGFFQASQFIWYPADSLFFLLKEQALGFVFSQPEFFADEEISKEGLLALTVQRLPFSTTCHWFIKKRQERHFEFLIHRERWLRTNSSLSNGFFCSKTQTLFESYQYLSNLFLSNGRLVDQMTKTLLRKRWIFPDEMKIQIGFMYTGEGFPITSPERYVAMK.

1336–1343 (GSIGTGRS) provides a ligand contact to ATP. The disordered stretch occupies residues 1852 to 1876 (EEEAELQDEEAELQDEGAGRKDEEA). Residues 1854 to 1866 (EAELQDEEAELQD) show a composition bias toward acidic residues.

Belongs to the Ycf2 family.

The protein resides in the plastid. The protein localises to the chloroplast stroma. Probable ATPase of unknown function. Its presence in a non-photosynthetic plant (Epifagus virginiana) and experiments in tobacco indicate that it has an essential function which is probably not related to photosynthesis. The chain is Protein Ycf2 (ycf2-A) from Pelargonium hortorum (Common geranium).